A 243-amino-acid polypeptide reads, in one-letter code: NAD(P)H-quinone oxidoreductase subunit K, chloroplastic (243 aa).

[4Fe-4S] cluster contacts are provided by Cys-65, Cys-66, Cys-130, and Cys-161.

The protein belongs to the complex I 20 kDa subunit family. In terms of assembly, NDH is composed of at least 16 different subunits, 5 of which are encoded in the nucleus. [4Fe-4S] cluster is required as a cofactor.

The protein resides in the plastid. The protein localises to the chloroplast thylakoid membrane. The catalysed reaction is a plastoquinone + NADH + (n+1) H(+)(in) = a plastoquinol + NAD(+) + n H(+)(out). It carries out the reaction a plastoquinone + NADPH + (n+1) H(+)(in) = a plastoquinol + NADP(+) + n H(+)(out). Functionally, NDH shuttles electrons from NAD(P)H:plastoquinone, via FMN and iron-sulfur (Fe-S) centers, to quinones in the photosynthetic chain and possibly in a chloroplast respiratory chain. The immediate electron acceptor for the enzyme in this species is believed to be plastoquinone. Couples the redox reaction to proton translocation, and thus conserves the redox energy in a proton gradient. This Marchantia polymorpha (Common liverwort) protein is NAD(P)H-quinone oxidoreductase subunit K, chloroplastic.